The following is a 102-amino-acid chain: Large ribosomal subunit protein uL24 (102 aa).

The protein belongs to the universal ribosomal protein uL24 family. In terms of assembly, part of the 50S ribosomal subunit.

Its function is as follows. One of two assembly initiator proteins, it binds directly to the 5'-end of the 23S rRNA, where it nucleates assembly of the 50S subunit. One of the proteins that surrounds the polypeptide exit tunnel on the outside of the subunit. This Allorhizobium ampelinum (strain ATCC BAA-846 / DSM 112012 / S4) (Agrobacterium vitis (strain S4)) protein is Large ribosomal subunit protein uL24.